Reading from the N-terminus, the 324-residue chain is MSDRDLFAGLLAPRSFPGWVELLLPRIEARFQEGRHGDWPAWMQLLGELPKVVPTRLDFAQNAVRIEGDTDCDGATRRSIETALRRLHPWRKGPYDIHGIFIDAEWRSDLKWRRLEGAIAPLAGRRVLDVGCGNGYHAWRMLGAGAKSVIGIDPTLLSVVQFLAVRHFAGDWPVAVLPLGIEDFPAETRAFDTVFSMGVLYHRRSPFDHLVELKGCLRPGGELVLETLVVEGEAGRVLVPEGRYAQMRNVWFVPSPPTLSSWLTRAGFRQARLIDVSPTTTQEQRSTGWMRFQSLADFLDPEDPSRTIEGHPAPRRAIFLAEAP.

Residues Lys92, Trp106, Lys111, Gly131, 153–155 (DPT), 181–182 (IE), Met197, Tyr201, and Arg316 contribute to the carboxy-S-adenosyl-L-methionine site.

Belongs to the class I-like SAM-binding methyltransferase superfamily. CmoB family. As to quaternary structure, homotetramer.

The catalysed reaction is carboxy-S-adenosyl-L-methionine + 5-hydroxyuridine(34) in tRNA = 5-carboxymethoxyuridine(34) in tRNA + S-adenosyl-L-homocysteine + H(+). Its function is as follows. Catalyzes carboxymethyl transfer from carboxy-S-adenosyl-L-methionine (Cx-SAM) to 5-hydroxyuridine (ho5U) to form 5-carboxymethoxyuridine (cmo5U) at position 34 in tRNAs. This Methylococcus capsulatus (strain ATCC 33009 / NCIMB 11132 / Bath) protein is tRNA U34 carboxymethyltransferase.